We begin with the raw amino-acid sequence, 567 residues long: Dynein, 70 kDa intermediate chain, flagellar outer arm (567 aa).

4 WD repeats span residues 214 to 254 (VPTS…GPVE), 261 to 302 (SHRD…ECVE), 360 to 399 (GHHGPIYGLRRNPFNSKYFLSIGDWTARVWVEDTAVKTPI), and 404 to 444 (YHPT…NEPT).

Belongs to the dynein intermediate chain family. As to quaternary structure, consists of at least 3 heavy chains (alpha, beta and gamma), 2 intermediate chains and 8 light chains.

The protein localises to the cytoplasm. It localises to the cytoskeleton. The protein resides in the flagellum axoneme. In terms of biological role, may play a role in regulating dynein heavy chain (DHC) activity. May function in holding IC78 to the DHC, or in stabilizing the entire dynein complex. The protein is Dynein, 70 kDa intermediate chain, flagellar outer arm (ODA6) of Chlamydomonas reinhardtii (Chlamydomonas smithii).